The following is a 253-amino-acid chain: Ribonuclease 3 (253 aa).

Residues 29–157 enclose the RNase III domain; it reads VDELQKTIGH…MLGAVFLDAG (129 aa). Glutamate 70 is a binding site for Mg(2+). The active site involves aspartate 74. Mg(2+)-binding residues include aspartate 143 and glutamate 146. The active site involves glutamate 146. The 70-residue stretch at 184 to 253 folds into the DRBM domain; the sequence is DYKSQLQELT…AARAVATLDK (70 aa).

This sequence belongs to the ribonuclease III family. As to quaternary structure, homodimer. Requires Mg(2+) as cofactor.

The protein resides in the cytoplasm. The catalysed reaction is Endonucleolytic cleavage to 5'-phosphomonoester.. Digests double-stranded RNA. Involved in the processing of primary rRNA transcript to yield the immediate precursors to the large and small rRNAs (23S and 16S). Processes some mRNAs, and tRNAs when they are encoded in the rRNA operon. Processes pre-crRNA and tracrRNA of type II CRISPR loci if present in the organism. The protein is Ribonuclease 3 of Nitratidesulfovibrio vulgaris (strain ATCC 29579 / DSM 644 / CCUG 34227 / NCIMB 8303 / VKM B-1760 / Hildenborough) (Desulfovibrio vulgaris).